A 332-amino-acid chain; its full sequence is NADH-quinone oxidoreductase subunit H (332 aa).

9 helical membrane passes run 4–24, 44–64, 78–98, 120–140, 165–185, 194–214, 255–275, 279–299, and 312–332; these read FAFF…IFAS, IGPD…MIKL, FIFA…LAAI, VALL…FLGG, VGAL…LVDI, FSWL…ALFI, IAGA…FWII, IMMI…RAAF, and YLIL…TVLL.

Belongs to the complex I subunit 1 family. As to quaternary structure, NDH-1 is composed of 14 different subunits. Subunits NuoA, H, J, K, L, M, N constitute the membrane sector of the complex.

The protein resides in the cell inner membrane. It carries out the reaction a quinone + NADH + 5 H(+)(in) = a quinol + NAD(+) + 4 H(+)(out). Functionally, NDH-1 shuttles electrons from NADH, via FMN and iron-sulfur (Fe-S) centers, to quinones in the respiratory chain. The immediate electron acceptor for the enzyme in this species is believed to be ubiquinone. Couples the redox reaction to proton translocation (for every two electrons transferred, four hydrogen ions are translocated across the cytoplasmic membrane), and thus conserves the redox energy in a proton gradient. This subunit may bind ubiquinone. The chain is NADH-quinone oxidoreductase subunit H from Campylobacter jejuni subsp. jejuni serotype O:23/36 (strain 81-176).